The chain runs to 251 residues: Triosephosphate isomerase (251 aa).

12–14 (NWK) is a substrate binding site. The active-site Electrophile is the histidine 98. Glutamate 168 (proton acceptor) is an active-site residue. Substrate-binding positions include glycine 174, serine 213, and 234–235 (GG).

This sequence belongs to the triosephosphate isomerase family. Homodimer.

The protein resides in the cytoplasm. The catalysed reaction is D-glyceraldehyde 3-phosphate = dihydroxyacetone phosphate. It participates in carbohydrate biosynthesis; gluconeogenesis. The protein operates within carbohydrate degradation; glycolysis; D-glyceraldehyde 3-phosphate from glycerone phosphate: step 1/1. In terms of biological role, involved in the gluconeogenesis. Catalyzes stereospecifically the conversion of dihydroxyacetone phosphate (DHAP) to D-glyceraldehyde-3-phosphate (G3P). The sequence is that of Triosephosphate isomerase from Afipia carboxidovorans (strain ATCC 49405 / DSM 1227 / KCTC 32145 / OM5) (Oligotropha carboxidovorans).